The sequence spans 173 residues: Flavodoxin 2 (173 aa).

A Flavodoxin-like domain is found at 3–165 (MGLFYGSSTC…RIQSWCEQIL (163 aa)).

Belongs to the flavodoxin family. FMN is required as a cofactor.

Its function is as follows. Low-potential electron donor to a number of redox enzymes. In Escherichia coli O157:H7, this protein is Flavodoxin 2 (fldB).